The following is a 526-amino-acid chain: Sugar transport protein 13 (526 aa).

The Cytoplasmic segment spans residues 1–18 (MTGGGFATSANGVEFEAK). Residues 19 to 39 (ITPIVIISCIMAATGGLMFGY) traverse the membrane as a helical segment. The Extracellular portion of the chain corresponds to 40-81 (DVGVSGGVTSMPDFLEKFFPVVYRKVVAGADKDSNYCKYDNQ). A helical membrane pass occupies residues 82–102 (GLQLFTSSLYLAGLTATFFAS). Residues 103 to 111 (YTTRTLGRR) are Cytoplasmic-facing. Residues 112 to 132 (LTMLIAGVFFIIGVALNAGAQ) form a helical membrane-spanning segment. Residues 133–141 (DLAMLIAGR) are Extracellular-facing. The chain crosses the membrane as a helical span at residues 142-162 (ILLGCGVGFANQAVPLFLSEI). The Cytoplasmic segment spans residues 163–168 (APTRIR). A helical transmembrane segment spans residues 169–189 (GGLNILFQLNVTIGILFANLV). At 190–203 (NYGTAKIKGGWGWR) the chain is on the extracellular side. A helical transmembrane segment spans residues 204–224 (LSLGLAGIPALLLTVGALLVT). Residues 225-296 (ETPNSLVERG…IAVALQIFQQ (72 aa)) lie on the Cytoplasmic side of the membrane. Residues 297 to 317 (CTGINAIMFYAPVLFSTLGFG) traverse the membrane as a helical segment. The Extracellular portion of the chain corresponds to 318 to 319 (SD). Residues 320–340 (ASLYSAVVTGAVNVLSTLVSI) form a helical membrane-spanning segment. Residues 341 to 349 (YSVDKVGRR) lie on the Cytoplasmic side of the membrane. Residues 350-370 (VLLLEAGVQMFFSQVVIAIIL) form a helical membrane-spanning segment. The Extracellular segment spans residues 371 to 383 (GVKVTDTSTNLSK). The helical transmembrane segment at 384–404 (GFAILVVVMICTYVAAFAWSW) threads the bilayer. Over 405–426 (GPLGWLIPSETFPLETRSAGQS) the chain is Cytoplasmic. A helical transmembrane segment spans residues 427 to 447 (VTVCVNLLFTFIIAQAFLSML). The Extracellular segment spans residues 448-451 (CHFK). Residues 452-472 (FGIFIFFSAWVLIMSVFVMFL) traverse the membrane as a helical segment. At 473–526 (LPETKNIPIEEMTERVWKKHWFWARFMDDHNDHEFVNGEKSNGKSNGFDPSTRL) the chain is on the cytoplasmic side.

It belongs to the major facilitator superfamily. Sugar transporter (TC 2.A.1.1) family.

It is found in the cell membrane. Mediates an active uptake of hexoses, probably by sugar/hydrogen symport. The chain is Sugar transport protein 13 (STP13) from Arabidopsis thaliana (Mouse-ear cress).